Here is a 376-residue protein sequence, read N- to C-terminus: N-acetyldiaminopimelate deacetylase (376 aa).

Residue aspartate 69 is part of the active site. Catalysis depends on glutamate 128, which acts as the Proton acceptor.

It belongs to the peptidase M20A family. N-acetyldiaminopimelate deacetylase subfamily.

The enzyme catalyses N-acetyl-(2S,6S)-2,6-diaminopimelate + H2O = (2S,6S)-2,6-diaminopimelate + acetate. Its pathway is amino-acid biosynthesis; L-lysine biosynthesis via DAP pathway; LL-2,6-diaminopimelate from (S)-tetrahydrodipicolinate (acetylase route): step 3/3. Its function is as follows. Catalyzes the conversion of N-acetyl-diaminopimelate to diaminopimelate and acetate. The protein is N-acetyldiaminopimelate deacetylase of Bacillus cereus (strain B4264).